The following is a 249-amino-acid chain: Benzil reductase ((S)-benzoin forming) (249 aa).

Residues I6, N87, Y154, K158, V189, and T191 each coordinate NADP(+). Y154 functions as the Proton acceptor in the catalytic mechanism.

Belongs to the short-chain dehydrogenases/reductases (SDR) family.

It is found in the cytoplasm. The catalysed reaction is (S)-benzoin + NADP(+) = benzil + NADPH + H(+). It catalyses the reaction 2-hydroxy-1-phenyl-1-propanone + NADP(+) = 1-phenyl-1,2-propanedione + NADPH + H(+). With respect to regulation, inhibited by Cibacron blue 3GA, a general SDR family inhibitor. Functionally, reduces benzil stereospecifically to (S)-benzoin. Can also reduce 1-phenyl-1,2-propanedione, 1,4-naphthoquinone, 1-(4-methyl-phenyl)-2-phenyl-ethane-1,2-dione, 1-(4-fluoro-phenyl)-2-phenyl-ethane-1,2-dione, methyl benzoylformate and p-nitrobenzaldehyde in decreasing order. This chain is Benzil reductase ((S)-benzoin forming), found in Bacillus cereus.